The sequence spans 345 residues: Methylthioribose-1-phosphate isomerase (345 aa).

Substrate-binding positions include 44–46 (RGA), R86, and Q194. The Proton donor role is filled by D235. Residue 245–246 (NK) coordinates substrate.

Belongs to the eIF-2B alpha/beta/delta subunits family. MtnA subfamily.

The enzyme catalyses 5-(methylsulfanyl)-alpha-D-ribose 1-phosphate = 5-(methylsulfanyl)-D-ribulose 1-phosphate. Its pathway is amino-acid biosynthesis; L-methionine biosynthesis via salvage pathway; L-methionine from S-methyl-5-thio-alpha-D-ribose 1-phosphate: step 1/6. Its function is as follows. Catalyzes the interconversion of methylthioribose-1-phosphate (MTR-1-P) into methylthioribulose-1-phosphate (MTRu-1-P). This chain is Methylthioribose-1-phosphate isomerase, found in Desulfitobacterium hafniense (strain Y51).